The following is a 591-amino-acid chain: V-type ATP synthase alpha chain (591 aa).

An ATP-binding site is contributed by 232 to 239; that stretch reads GPFGAGKT.

It belongs to the ATPase alpha/beta chains family.

The catalysed reaction is ATP + H2O + 4 H(+)(in) = ADP + phosphate + 5 H(+)(out). Produces ATP from ADP in the presence of a proton gradient across the membrane. The V-type alpha chain is a catalytic subunit. The sequence is that of V-type ATP synthase alpha chain from Nitrosococcus oceani (strain ATCC 19707 / BCRC 17464 / JCM 30415 / NCIMB 11848 / C-107).